The sequence spans 37 residues: Lambda-hexatoxin-Hf1a (37 aa).

4 cysteine pairs are disulfide-bonded: Cys4/Cys18, Cys11/Cys23, Cys14/Cys15, and Cys17/Cys34.

This sequence belongs to the neurotoxin 11 (kappa toxin) family. Expressed by the venom gland.

The protein resides in the secreted. This excitatory toxin inhibits insect calcium-activated potassium (KCa) channels (Slo-type). This chain is Lambda-hexatoxin-Hf1a, found in Hadronyche formidabilis (Northern tree funnel-web spider).